A 213-amino-acid polypeptide reads, in one-letter code: Ubiquitin-conjugating enzyme E2 S (213 aa).

One can recognise a UBC core domain in the interval Q13–K159. Catalysis depends on C97, which acts as the Glycyl thioester intermediate. Residues H157–L213 form a disordered region. The segment covering C174–E185 has biased composition (polar residues). Basic and acidic residues predominate over residues H192–K202. Residues K203–L213 show a composition bias toward basic residues.

This sequence belongs to the ubiquitin-conjugating enzyme family.

It catalyses the reaction S-ubiquitinyl-[E1 ubiquitin-activating enzyme]-L-cysteine + [E2 ubiquitin-conjugating enzyme]-L-cysteine = [E1 ubiquitin-activating enzyme]-L-cysteine + S-ubiquitinyl-[E2 ubiquitin-conjugating enzyme]-L-cysteine.. The protein operates within protein modification; protein ubiquitination. Catalyzes the covalent attachment of ubiquitin to other proteins. Acts as an essential factor of the anaphase promoting complex/cyclosome (APC/C), a cell cycle-regulated ubiquitin ligase that controls progression through mitosis. Acts by specifically elongating polyubiquitin chains initiated by the E2 enzyme UBCH10 on APC/C substrates, enhancing the degradation of APC/C substrates by the proteasome and promoting mitotic exit. This is Ubiquitin-conjugating enzyme E2 S from Branchiostoma floridae (Florida lancelet).